We begin with the raw amino-acid sequence, 381 residues long: Cytochrome b (381 aa).

The next 4 membrane-spanning stretches (helical) occupy residues 33–53, 77–98, 113–133, and 178–198; these read FGSLLGICLVIQILTGLFLAM, WLIRNLHANGASMFFMCLFLHV, WNIGVMLLLTVTATAFVGYVL, and FFALHFLLPFVIAGLTLVHLT. His83 and His97 together coordinate heme b. Positions 182 and 196 each coordinate heme b. His201 serves as a coordination point for a ubiquinone. A run of 4 helical transmembrane segments spans residues 226 to 246, 288 to 308, 320 to 340, and 347 to 367; these read IKDILGLMFLLLVLLSLALFS, LGGVLALLASILILLVIPFLH, ISQTLFWILTANLITLTWIGG, and FIIIGQPASILYFPLIHHPMP.

The protein belongs to the cytochrome b family. In terms of assembly, the cytochrome bc1 complex contains 11 subunits: 3 respiratory subunits (MT-CYB, CYC1 and UQCRFS1), 2 core proteins (UQCRC1 and UQCRC2) and 6 low-molecular weight proteins (UQCRH/QCR6, UQCRB/QCR7, UQCRQ/QCR8, UQCR10/QCR9, UQCR11/QCR10 and a cleavage product of UQCRFS1). This cytochrome bc1 complex then forms a dimer. The cofactor is heme b.

The protein resides in the mitochondrion inner membrane. Its function is as follows. Component of the ubiquinol-cytochrome c reductase complex (complex III or cytochrome b-c1 complex) that is part of the mitochondrial respiratory chain. The b-c1 complex mediates electron transfer from ubiquinol to cytochrome c. Contributes to the generation of a proton gradient across the mitochondrial membrane that is then used for ATP synthesis. This Sminthopsis youngsoni (Lesser hairy-footed dunnart) protein is Cytochrome b (MT-CYB).